The sequence spans 2742 residues: Neurobeachin-like protein 2 (2742 aa).

Disordered stretches follow at residues Ala1312–Ser1333 and Leu1356–Pro1434. The span at Thr1384 to Phe1394 shows a compositional bias: pro residues. A compositionally biased stretch (polar residues) spans Gly1421–Thr1433. Thr1855 is modified (phosphothreonine). The 126-residue stretch at Glu1903–Leu2028 folds into the BEACH-type PH domain. Positions Arg2041–Arg2333 constitute a BEACH domain. 7 WD repeats span residues Leu2374–Pro2412, Lys2436–Arg2479, Leu2482–Leu2519, Lys2532–Val2570, Ala2577–Leu2619, Arg2627–Leu2662, and Pro2670–Gly2705. 2 positions are modified to phosphoserine: Ser2727 and Ser2730.

This sequence belongs to the WD repeat neurobeachin family.

The protein localises to the endoplasmic reticulum. Its function is as follows. Probably involved in thrombopoiesis. Plays a role in the development or secretion of alpha-granules, that contain several growth factors important for platelet biogenesis. This Mus musculus (Mouse) protein is Neurobeachin-like protein 2 (Nbeal2).